Here is a 681-residue protein sequence, read N- to C-terminus: DNA ligase (681 aa).

NAD(+)-binding positions include 34 to 38 (DEEYD), 83 to 84 (SL), and glutamate 112. The N6-AMP-lysine intermediate role is filled by lysine 114. Arginine 135, glutamate 169, lysine 285, and lysine 309 together coordinate NAD(+). The Zn(2+) site is built by cysteine 403, cysteine 406, cysteine 422, and cysteine 427. Residues 584 to 673 (TTSNILDGLT…GVELKESWKK (90 aa)) enclose the BRCT domain.

It belongs to the NAD-dependent DNA ligase family. LigA subfamily. Requires Mg(2+) as cofactor. It depends on Mn(2+) as a cofactor.

It carries out the reaction NAD(+) + (deoxyribonucleotide)n-3'-hydroxyl + 5'-phospho-(deoxyribonucleotide)m = (deoxyribonucleotide)n+m + AMP + beta-nicotinamide D-nucleotide.. Its function is as follows. DNA ligase that catalyzes the formation of phosphodiester linkages between 5'-phosphoryl and 3'-hydroxyl groups in double-stranded DNA using NAD as a coenzyme and as the energy source for the reaction. It is essential for DNA replication and repair of damaged DNA. The sequence is that of DNA ligase from Fervidobacterium nodosum (strain ATCC 35602 / DSM 5306 / Rt17-B1).